We begin with the raw amino-acid sequence, 243 residues long: 1-(5-phosphoribosyl)-5-[(5-phosphoribosylamino)methylideneamino] imidazole-4-carboxamide isomerase (243 aa).

Aspartate 8 serves as the catalytic Proton acceptor. Aspartate 129 serves as the catalytic Proton donor.

Belongs to the HisA/HisF family.

The protein localises to the cytoplasm. It carries out the reaction 1-(5-phospho-beta-D-ribosyl)-5-[(5-phospho-beta-D-ribosylamino)methylideneamino]imidazole-4-carboxamide = 5-[(5-phospho-1-deoxy-D-ribulos-1-ylimino)methylamino]-1-(5-phospho-beta-D-ribosyl)imidazole-4-carboxamide. The protein operates within amino-acid biosynthesis; L-histidine biosynthesis; L-histidine from 5-phospho-alpha-D-ribose 1-diphosphate: step 4/9. In Citrifermentans bemidjiense (strain ATCC BAA-1014 / DSM 16622 / JCM 12645 / Bem) (Geobacter bemidjiensis), this protein is 1-(5-phosphoribosyl)-5-[(5-phosphoribosylamino)methylideneamino] imidazole-4-carboxamide isomerase.